The sequence spans 167 residues: MAMSPALRNSVMAAISGGAIAIASVLITGPGGNDGLEGVRYKPYKDVVGVLTVCYGHTGKDIMPGKTYTEAECKALLNKDLITVARQINPYIKVDIPETTRGALYSFVYNVGAGNFRTSTLLRKINQGDIKGACDQLRRWTYAGGKQWKGLMTRREVERDVCLWGKQ.

A helical; Signal-anchor for type II membrane protein transmembrane segment spans residues 10 to 32 (SVMAAISGGAIAIASVLITGPGG). Catalysis depends on proton donor/acceptor residues Glu-37 and Asp-46.

Belongs to the glycosyl hydrolase 24 family.

The protein resides in the host cell inner membrane. The enzyme catalyses Hydrolysis of (1-&gt;4)-beta-linkages between N-acetylmuramic acid and N-acetyl-D-glucosamine residues in a peptidoglycan and between N-acetyl-D-glucosamine residues in chitodextrins.. Its function is as follows. Signal-arrest-release (SAR) endolysin with lysozyme activity that degrades host peptidoglycans and participates with the pinholin and spanin proteins in the sequential events which lead to programmed host cell lysis releasing the mature viral particles. Once the pinholin has permeabilized the host cell membrane, the SAR-endolysin is released into the periplasm where it breaks down the peptidoglycan layer. The sequence is that of SAR-endolysin (19) from Bacteriophage PS119.